The following is a 393-amino-acid chain: Dihydrolipoyllysine-residue succinyltransferase component of 2-oxoglutarate dehydrogenase complex (393 aa).

A Lipoyl-binding domain is found at 3–78; it reads RINILVPDLP…KSNQILGNIV (76 aa). An N6-lipoyllysine modification is found at K44. Catalysis depends on residues H364 and D368.

Belongs to the 2-oxoacid dehydrogenase family. In terms of assembly, forms a 24-polypeptide structural core with octahedral symmetry. Part of the 2-oxoglutarate dehydrogenase (OGDH) complex composed of E1 (2-oxoglutarate dehydrogenase), E2 (dihydrolipoamide succinyltransferase) and E3 (dihydrolipoamide dehydrogenase); the complex contains multiple copies of the three enzymatic components (E1, E2 and E3). (R)-lipoate serves as cofactor.

It carries out the reaction N(6)-[(R)-dihydrolipoyl]-L-lysyl-[protein] + succinyl-CoA = N(6)-[(R)-S(8)-succinyldihydrolipoyl]-L-lysyl-[protein] + CoA. Its pathway is amino-acid degradation; L-lysine degradation via saccharopine pathway; glutaryl-CoA from L-lysine: step 6/6. Functionally, E2 component of the 2-oxoglutarate dehydrogenase (OGDH) complex which catalyzes the second step in the conversion of 2-oxoglutarate to succinyl-CoA and CO(2). The protein is Dihydrolipoyllysine-residue succinyltransferase component of 2-oxoglutarate dehydrogenase complex (sucB) of Buchnera aphidicola subsp. Schizaphis graminum (strain Sg).